The sequence spans 1181 residues: Putative primase (1181 aa).

Positions 1141–1181 (RSHSTMVEHDMDDDESTNKKQELEEEDEECIDIDEYNNERF) are disordered. A compositionally biased stretch (acidic residues) spans 1163-1181 (LEEEDEECIDIDEYNNERF).

This sequence belongs to the eukaryotic-type primase small subunit family.

Synthesizes small RNA primers for the Okazaki fragments on both template strands at replication forks during viral DNA synthesis. The protein is Putative primase of Magallana gigas (Pacific oyster).